A 67-amino-acid chain; its full sequence is MKVTAVLMVAVLVLTACQLTTANTTDYVRRIPARKSTMSRRECSESGEWCGLDPALCCGSSCFFTCN.

Residues 1 to 24 (MKVTAVLMVAVLVLTACQLTTANT) form the signal peptide. Residues 25-39 (TDYVRRIPARKSTMS) constitute a propeptide that is removed on maturation. Intrachain disulfides connect cysteine 43–cysteine 58, cysteine 50–cysteine 62, and cysteine 57–cysteine 66.

Belongs to the conotoxin O1 superfamily. As to expression, expressed by the venom duct.

The protein localises to the secreted. The protein is Conotoxin Cl6.7 of Californiconus californicus (California cone).